Consider the following 471-residue polypeptide: uncharacterized protein (471 aa).

The segment at 13-57 (KGGATIGATPMESDSSVSALSGSSASKVSRRGRRRSHLASKSSAP) is disordered. A compositionally biased stretch (low complexity) spans 27–39 (SSVSALSGSSASK). A compositionally biased stretch (basic residues) spans 40-50 (VSRRGRRRSHL). 2 consecutive CCHC-type zinc fingers follow at residues 397–414 (YACH…ECRQ) and 417–434 (SVCR…KCQN). The tract at residues 438 to 457 (CRNCRHRGQPSGHYMLSNAC) is gag-like cysteine motif.

This sequence to corresponding ORF of B.mori (R1BM).

This is an uncharacterized protein from Drosophila melanogaster (Fruit fly).